The sequence spans 388 residues: Putative pyridoxal phosphate-dependent aminotransferase EpsN (388 aa).

K190 bears the N6-(pyridoxal phosphate)lysine mark.

Belongs to the DegT/DnrJ/EryC1 family. Pyridoxal 5'-phosphate is required as a cofactor.

Functionally, may be involved in the production of the exopolysaccharide (EPS) component of the extracellular matrix during biofilm formation. EPS is responsible for the adhesion of chains of cells into bundles. This Bacillus subtilis (strain 168) protein is Putative pyridoxal phosphate-dependent aminotransferase EpsN (epsN).